A 493-amino-acid chain; its full sequence is WAS/WASL-interacting protein family member 1 (493 aa).

The segment covering 1 to 14 (MPVPPPPAPPPPPT) has biased composition (pro residues). The disordered stretch occupies residues 1 to 493 (MPVPPPPAPP…GAPPLPPIPR (493 aa)). Polar residues predominate over residues 21–31 (EKPTLNKTEQA). The WH2 domain maps to 32-49 (GRNALLSDISKGKKLKKT). Arg-33 bears the Asymmetric dimethylarginine mark. The interval 45–48 (KLKK) is binds actin. Residues 67-105 (ASAGGYGGGGGGGGGGGGGGGGSGGNFGGGGPPGLGGLF) are compositionally biased toward gly residues. Residues Arg-126 and Arg-135 each carry the omega-N-methylarginine modification. Pro residues-rich tracts occupy residues 142–155 (FSPP…PAPS), 162–175 (PPEP…PPRP), and 183–195 (SLPP…PRPV). Ser-143 carries the phosphoserine modification. Ser-227 carries the phosphoserine modification. Pro residues-rich tracts occupy residues 239 to 248 (FPRPPLPPTP), 274 to 290 (VPPP…PSTP), and 298 to 315 (APPP…PLPP). A phosphoserine mark is found at Ser-330 and Ser-340. Residues 336 to 361 (PPLPSPGRSGPLPPPPSERPPPPVRD) are compositionally biased toward pro residues. 3 XRSGPXPPXP motif repeats span residues 342–351 (GRSGPLPPPP), 364–373 (GRSGPLPPPP), and 400–409 (PRSGPRPPLP). Residues 403–424 (GPRPPLPPDRPGAGAPPPPPPS) show a composition bias toward pro residues. A compositionally biased stretch (polar residues) spans 425–434 (TSVRNGFQDS). Positions 470–484 (ARNESRSGSNRRERG) are enriched in basic and acidic residues.

The protein belongs to the verprolin family. As to quaternary structure, binds to WAS within the N-terminal region, at a site distinct from the CDC42-binding site. Binds profilin and actin. Binds to WASL. Interacts with DBNL. Interacts with DBNL. Interacts with FNBP1L (via the SH3 domain).

It localises to the cytoplasmic vesicle. The protein localises to the cytoplasm. It is found in the cytoskeleton. The protein resides in the cell projection. Its subcellular location is the ruffle. Plays a role in the reorganization of the actin cytoskeleton. Contributes with NCK1 and GRB2 in the recruitment and activation of WASL. May participate in regulating the subcellular localization of WASL, resulting in the disassembly of stress fibers in favor of filopodia formation. Plays a role in the formation of cell ruffles. The polypeptide is WAS/WASL-interacting protein family member 1 (Wipf1) (Mus musculus (Mouse)).